Reading from the N-terminus, the 425-residue chain is Sucrose-phosphatase 2 (425 aa).

It belongs to the sucrose phosphatase family. Homodimer. The cofactor is Mg(2+).

The enzyme catalyses sucrose 6(F)-phosphate + H2O = sucrose + phosphate. The protein operates within glycan biosynthesis; sucrose biosynthesis; sucrose from D-fructose 6-phosphate and UDP-alpha-D-glucose: step 2/2. With respect to regulation, inhibited by EDTA. Catalyzes the final step of sucrose synthesis. This chain is Sucrose-phosphatase 2 (SPP2), found in Nicotiana tabacum (Common tobacco).